Here is a 438-residue protein sequence, read N- to C-terminus: Elongation factor 1-alpha (438 aa).

A tr-type G domain is found at 6-229 (KPHLNIVIIG…ALDTLEVPPK (224 aa)). A G1 region spans residues 15-22 (GHVDHGKS). Residue 15–22 (GHVDHGKS) participates in GTP binding. Mg(2+) is bound at residue Ser-22. The tract at residues 71-75 (GVTIS) is G2. Positions 92–95 (DAPG) are G3. GTP contacts are provided by residues 92–96 (DAPGH) and 154–157 (NKMD). The segment at 154 to 157 (NKMD) is G4. Residues 195–197 (SAW) are G5.

This sequence belongs to the TRAFAC class translation factor GTPase superfamily. Classic translation factor GTPase family. EF-Tu/EF-1A subfamily.

It localises to the cytoplasm. The catalysed reaction is GTP + H2O = GDP + phosphate + H(+). GTP hydrolase that promotes the GTP-dependent binding of aminoacyl-tRNA to the A-site of ribosomes during protein biosynthesis. This chain is Elongation factor 1-alpha, found in Desulfurococcus mucosus (Desulfurococcus mobilis).